The primary structure comprises 412 residues: MGDIARQAPDKDTGEDIYQYLLERITNLENRNLELREQFRQMESEKRYVETQKIRYERELRKLKSEIEQLRSPPLVIGTVTDVIDNSRVIVRSSAGPRFLVRTSQLIDPDLLKPGVRCTLNQQSLAIVDVLPTSYDAQIYGMELVESPEETYENIGGLEPQIEEIREAVELPLTKPQLFEKVGISPPKGVLLYGPPGTGKTLLARAVAHQTNAHFLRVVGSELVQKYIGEGARLVRELFDLAKQRAPSIIFIDEIDAIGAHRNDSTTSGDREVQRTLMQLLAEMDGFDNRGDVKIVAATNRIDILDRALLRPGRFDRMIEIPLPDHQGRLAILKIHTQYMNIGEDVNLSEVSRLTEGKNGADLRAICMEAGMFAIRMERDAVNSEDFMKAIDKLALDFDRHHFHTTFGEMFA.

Residues 15 to 73 (EDIYQYLLERITNLENRNLELREQFRQMESEKRYVETQKIRYERELRKLKSEIEQLRSP) are a coiled coil. ATP contacts are provided by residues 197–202 (GTGKTL) and His-336. Residues 410-412 (MFA) form a docks into pockets in the proteasome alpha-ring to cause gate opening region.

The protein belongs to the AAA ATPase family. In terms of assembly, homohexamer. The hexameric complex has a two-ring architecture resembling a top hat that caps the 20S proteasome core at one or both ends. Upon ATP-binding, the C-terminus of PAN interacts with the alpha-rings of the proteasome core by binding to the intersubunit pockets.

Its subcellular location is the cytoplasm. Its function is as follows. ATPase which is responsible for recognizing, binding, unfolding and translocation of substrate proteins into the archaeal 20S proteasome core particle. Is essential for opening the gate of the 20S proteasome via an interaction with its C-terminus, thereby allowing substrate entry and access to the site of proteolysis. Thus, the C-termini of the proteasomal ATPase function like a 'key in a lock' to induce gate opening and therefore regulate proteolysis. Unfolding activity requires energy from ATP hydrolysis, whereas ATP binding alone promotes ATPase-20S proteasome association which triggers gate opening, and supports translocation of unfolded substrates. The sequence is that of Proteasome-activating nucleotidase from Methanoculleus marisnigri (strain ATCC 35101 / DSM 1498 / JR1).